The chain runs to 154 residues: Egg-lysin (154 aa).

A signal peptide spans 1 to 18 (MKLLVLCIFAMMATLAMS).

Monomer. Homodimer. Molecules associate into dimers and then rapidly dissociate again. Interacts (as a monomer) with the egg vitelline layer protein VERL (via VERL repeats); each VERL chain can bind multiple copies of lysin. In terms of tissue distribution, sperm (at protein level).

It is found in the cytoplasmic vesicle. Its subcellular location is the secretory vesicle. The protein localises to the acrosome lumen. Its function is as follows. Creates a 3 um hole in the egg vitelline layer through which the sperm passes. Does not have enzyme activity. Species-specific interaction between the sperm protein lysin and the egg protein VERL exposes a basic surface on lysin that may dissociate the egg vitelline layer via electrostatic repulsion. Plays a role in ensuring species-specific fertilization. This is Egg-lysin from Haliotis rufescens (California red abalone).